The primary structure comprises 71 residues: DNA-directed RNA polymerase subunit Rpo10 (71 aa).

Zn(2+)-binding residues include C6, C9, C52, and C53.

Belongs to the archaeal Rpo10/eukaryotic RPB10 RNA polymerase subunit family. As to quaternary structure, part of the RNA polymerase complex. The cofactor is Zn(2+).

It localises to the cytoplasm. The catalysed reaction is RNA(n) + a ribonucleoside 5'-triphosphate = RNA(n+1) + diphosphate. In terms of biological role, DNA-dependent RNA polymerase (RNAP) catalyzes the transcription of DNA into RNA using the four ribonucleoside triphosphates as substrates. The protein is DNA-directed RNA polymerase subunit Rpo10 of Methanocella arvoryzae (strain DSM 22066 / NBRC 105507 / MRE50).